Consider the following 98-residue polypeptide: NADH-ubiquinone oxidoreductase chain 4L (98 aa).

The next 3 membrane-spanning stretches (helical) occupy residues 2-22, 26-46, and 59-79; these read MMAV…TLMF, LMST…ITTI, and IPIV…ALLV.

This sequence belongs to the complex I subunit 4L family. As to quaternary structure, core subunit of respiratory chain NADH dehydrogenase (Complex I) which is composed of 45 different subunits.

It localises to the mitochondrion inner membrane. The catalysed reaction is a ubiquinone + NADH + 5 H(+)(in) = a ubiquinol + NAD(+) + 4 H(+)(out). In terms of biological role, core subunit of the mitochondrial membrane respiratory chain NADH dehydrogenase (Complex I) which catalyzes electron transfer from NADH through the respiratory chain, using ubiquinone as an electron acceptor. Part of the enzyme membrane arm which is embedded in the lipid bilayer and involved in proton translocation. The polypeptide is NADH-ubiquinone oxidoreductase chain 4L (MT-ND4L) (Phodopus sungorus (Striped hairy-footed hamster)).